Here is an 808-residue protein sequence, read N- to C-terminus: Enhancer of polycomb homolog 2 (808 aa).

Residues lysine 135, lysine 195, and lysine 324 each participate in a glycyl lysine isopeptide (Lys-Gly) (interchain with G-Cter in SUMO2) cross-link. Residues 337–357 (YPKKPKAEAGIAPQQPTPETL) form a disordered region. A Glycyl lysine isopeptide (Lys-Gly) (interchain with G-Cter in SUMO2) cross-link involves residue lysine 362. 3 disordered regions span residues 371 to 397 (QSSD…PDGS), 595 to 630 (QRQQ…CMSK), and 645 to 682 (VSAP…LYST). The span at 595-614 (QRQQLAQLHQKQQSQHSSQQ) shows a compositional bias: low complexity. Polar residues-rich tracts occupy residues 615–630 (THPK…CMSK) and 658–682 (EQNT…LYST). Phosphoserine is present on serine 755.

This sequence belongs to the enhancer of polycomb family.

The protein localises to the nucleus. Its function is as follows. May play a role in transcription or DNA repair. The polypeptide is Enhancer of polycomb homolog 2 (Epc2) (Mus musculus (Mouse)).